The sequence spans 484 residues: Membrane-bound lytic murein transglycosylase F (484 aa).

A signal peptide spans 1 to 18; sequence MKGLLLRIIAAFALVLWA. The segment at 19–267 is non-LT domain; sequence IDMVFPWQQM…RIEEKYFNHF (249 aa). The LT domain stretch occupies residues 268-484; the sequence is SQFDYVDMRQ…PLTDNQEKQE (217 aa). E312 is an active-site residue. The disordered stretch occupies residues 459–484; that stretch reads ADNKDKPSETDENLPLPLTDNQEKQE.

This sequence in the N-terminal section; belongs to the bacterial solute-binding protein 3 family. In the C-terminal section; belongs to the transglycosylase Slt family.

It is found in the cell outer membrane. The catalysed reaction is Exolytic cleavage of the (1-&gt;4)-beta-glycosidic linkage between N-acetylmuramic acid (MurNAc) and N-acetylglucosamine (GlcNAc) residues in peptidoglycan, from either the reducing or the non-reducing ends of the peptidoglycan chains, with concomitant formation of a 1,6-anhydrobond in the MurNAc residue.. Murein-degrading enzyme that degrades murein glycan strands and insoluble, high-molecular weight murein sacculi, with the concomitant formation of a 1,6-anhydromuramoyl product. Lytic transglycosylases (LTs) play an integral role in the metabolism of the peptidoglycan (PG) sacculus. Their lytic action creates space within the PG sacculus to allow for its expansion as well as for the insertion of various structures such as secretion systems and flagella. This Mannheimia succiniciproducens (strain KCTC 0769BP / MBEL55E) protein is Membrane-bound lytic murein transglycosylase F.